Consider the following 231-residue polypeptide: MNSLIKENMRMMVVMEGSVNGYQFKCTGEGDGNPYMGTQTMRIKVVEGGPLPFAFDILATSFMYGSKTFIKHTKGIPDFFKQSFPEGFTWERVTRYEDGGVFTVMQDTSLEDGCLVYHAKVTGVNFPSNGAVMQKKTKGWEPNTEMLYPADGGLRGYSQMALNVDGGGYLSCSFETTYRSKKTVENFKMPGFHFVDHRLERLEESDKEMFVVQHEHAVAKFCDLPSKLGRL.

The segment at residues 63-65 is a cross-link (2-iminomethyl-5-imidazolinone (Met-Gly)); that stretch reads MYG. Tyr64 carries the (E)-2,3-didehydrotyrosine modification.

Belongs to the GFP family. In terms of assembly, monomer. In terms of processing, contains a chromophore consisting of modified amino acid residues. The chromophore is formed by autocatalytic backbone condensation between Xaa-N and Gly-(N+2), oxidation of Tyr-(N+1) to didehydrotyrosine, and formation of a double bond to the alpha-amino nitrogen of residue Xaa-N. Maturation of the chromophore requires nothing other than molecular oxygen.

Its function is as follows. Pigment protein. The protein is Red fluorescent protein eqFP611 of Entacmaea quadricolor (Bubble-tip anemone).